A 224-amino-acid polypeptide reads, in one-letter code: Ribonuclease 3 (224 aa).

In terms of domain architecture, RNase III spans Ile-4–Gly-127. Glu-40 lines the Mg(2+) pocket. The active site involves Asp-44. Mg(2+)-binding residues include Asp-113 and Glu-116. The active site involves Glu-116. Residues Asp-154–Ala-223 enclose the DRBM domain.

The protein belongs to the ribonuclease III family. As to quaternary structure, homodimer. It depends on Mg(2+) as a cofactor.

Its subcellular location is the cytoplasm. The enzyme catalyses Endonucleolytic cleavage to 5'-phosphomonoester.. Its function is as follows. Digests double-stranded RNA. Involved in the processing of primary rRNA transcript to yield the immediate precursors to the large and small rRNAs (23S and 16S). Processes some mRNAs, and tRNAs when they are encoded in the rRNA operon. Processes pre-crRNA and tracrRNA of type II CRISPR loci if present in the organism. The protein is Ribonuclease 3 of Campylobacter jejuni subsp. jejuni serotype O:6 (strain 81116 / NCTC 11828).